Here is a 658-residue protein sequence, read N- to C-terminus: Glycogen debranching enzyme (658 aa).

The active-site Nucleophile is Asp336. Glu371 serves as the catalytic Proton donor.

This sequence belongs to the glycosyl hydrolase 13 family.

The catalysed reaction is Hydrolysis of (1-&gt;6)-alpha-D-glucosidic linkages to branches with degrees of polymerization of three or four glucose residues in limit dextrin.. The protein operates within glycan degradation; glycogen degradation. Removes maltotriose and maltotetraose chains that are attached by 1,6-alpha-linkage to the limit dextrin main chain, generating a debranched limit dextrin. The protein is Glycogen debranching enzyme of Klebsiella pneumoniae subsp. pneumoniae (strain ATCC 700721 / MGH 78578).